We begin with the raw amino-acid sequence, 78 residues long: Large ribosomal subunit protein bL28 (78 aa).

It belongs to the bacterial ribosomal protein bL28 family.

In Trichodesmium erythraeum (strain IMS101), this protein is Large ribosomal subunit protein bL28.